Reading from the N-terminus, the 358-residue chain is 4-hydroxybenzoate polyprenyltransferase, mitochondrial (358 aa).

The N-terminal 20 residues, 1-20, are a transit peptide targeting the mitochondrion; the sequence is MIIKPIASPARYFLRTPSWS. A run of 7 helical transmembrane segments spans residues 76-96, 107-127, 154-174, 202-222, 229-249, 275-295, and 336-356; these read TGTY…AYAY, LALF…INDL, AISL…QLNP, VVLG…LAGE, VVAP…TIYA, VLCG…IMNG, and NTGY…SFIY.

Belongs to the UbiA prenyltransferase family. It depends on Mg(2+) as a cofactor.

The protein resides in the mitochondrion. Its subcellular location is the mitochondrion inner membrane. The enzyme catalyses an all-trans-polyprenyl diphosphate + 4-hydroxybenzoate = a 4-hydroxy-3-(all-trans-polyprenyl)benzoate + diphosphate. It participates in cofactor biosynthesis; ubiquinone biosynthesis. Catalyzes the prenylation of para-hydroxybenzoate (PHB) with an all-trans polyprenyl group. Mediates the second step in the final reaction sequence of coenzyme Q (CoQ) biosynthesis, which is the condensation of the polyisoprenoid side chain with PHB, generating the first membrane-bound Q intermediate. The chain is 4-hydroxybenzoate polyprenyltransferase, mitochondrial from Schizosaccharomyces pombe (strain 972 / ATCC 24843) (Fission yeast).